The primary structure comprises 1628 residues: MSVTSWFLVSSSGTRHRLPREMIFVGREDCELMLQSRSVDKQHAVINYDSDKDEHRVKDLGSLNGTFVNDVRIPDQKYITLKLSDNIRFGYDINTYVLEQIQHQVPEEALKHEKYTSHLQMCLKTAAAGREDQFKEHGAHVDSAQAKQDKADKKATSDIPAYRTPLYGQPSWWGEDDDNKLDKEGRRQDEHYSERPNDMTQHEEEINGNMSYRDSQDQCVYPFRREPSYFEIPTKDFQQPVKPPETQVYEIPTKDTDAVPPVTPPVMQSHASFTIEFDDCQPGKIKIKDHVTKFSMRQRKTAGKEPAPTEMVSAESKVADWLVQNDPSLIRRPAPGEDVYSTKSDLPIHNRTLKGNRHEDGTQSDSEDPLVAQPEQEIGTPDHPQLQRQIKREPEELLHNQQAFVIQFFDDDDAPRKKRSQSFTHNANSPQNDTDPVLKAKAEKRKGTLHVEKVSTNGMGSTAPASKSLSSPSFPQRSNSFRREKTEDRISSAPTTAKLPGKNYGSVGKKSKLAQEFAAEYMREQVEVVKQAAEKPMTLPLSTSILQQPASQVQISSQAQTMQLTSDVRTGKVKNEEEDNLSDAGTYTIETETQDREVEQARKMIDQVFGVFESDEYSKIASTVYRPVIKLGEEEPLASEPSVPHKPIMSSTPPVKLSNGLPAETLIERTGSSSKQSQKWVSRWASLADSYPDASPTSPLDSQKQGLIADDEDVIERTEHQGEADPTVPSRTRRLLPQLPPENVMPTIFVCQESFSDESQRKSLEEPEKRISEENSSLLLVQEELDPDSLSDTSKSDDGVISVRKSAKASNTYRNGWKGEESHSREPSVQRTSVPSNEKKSTCFYVGNDDVGSVKQTSFGLSSKDVIKGPESHIKMKVNLHITAETPSSGKAVNQFPKKDNGSAKDPLSFVRQESFTKETSSSNVLPNKLPHISTHPLLKDLSVTKSNHDYSKETRLILKETETALAALEAKLFTQSHLDEIENTPCLRDDSLSGDSDVDTASTVSLVSDKNVPSHSQKNRIVSLQKEKSSSTSSIQEQYCQPSARERLSEKRRTVPADAGTRNVTKRLGMTRSTGARGSLDFTDEERCSSLPYMPVSETVSSDYEHSSSRHISRRKPFGQTCKDESSRSSNAQKVQQALTRSNSLSTPRPTRASKLRRARLGESSDNESADVERSNISPGTSSANSSSAKSSTETKKPSRLDILAMPRKRAGSFNVPSDSETTSSVRGMFSGRSIDQSYTSRKPAVAESKQPPKKPLPPTQKQTPRPRSSSVKYSSSSTSRRRQQGSDYVSTSEEECGSNHSTPKHKHSRASTATQTSRSSSVSRRQMPNSRQDEEEDEQEVYNNFMAQSVEIAEIARLSQTLVKDVASLAREIHDVAGDGDSQSSSGTGQSTSISSVPNTPASTISAREEIIKRSLQRTCSSQLVHHIPEASLNYQKIPPGSTGLEDFDQNMNDSREDPSKRRARNIEEVIFDNLMLNPVSHLSHTICANTEVLTEKMKILFQNTEKNWEEIEAKINSENEVPILKTSNKEISSILKELRRVQKQLEVINAIIDRSGHLDVPSSNKKTSSTILTSNPLSRTTNNSAARTESQTPGHVRNYMHKSSSSSSRSPGSSFSRDDEETYIV.

An FHA domain is found at 23-73; sequence IFVGREDCELMLQSRSVDKQHAVINYDSDKDEHRVKDLGSLNGTFVNDVRI. Disordered stretches follow at residues 136–201, 329–369, 415–504, 566–586, 637–659, 719–739, 758–842, 1005–1084, 1100–1341, 1379–1405, 1443–1463, and 1560–1628; these read EHGA…DMTQ, LIRR…SEDP, PRKK…GKNY, SDVR…DAGT, LASE…KLSN, EHQG…LPQL, ESQR…KKST, VSLV…LDFT, TVSS…EDEQ, AGDG…TPAS, GSTG…DPSK, and HLDV…TYIV. Basic and acidic residues-rich tracts occupy residues 147-156 and 180-201; these read KQDKADKKAT and KLDK…DMTQ. Residues 421-434 show a composition bias toward polar residues; the sequence is QSFTHNANSPQNDT. Residues 436-453 are compositionally biased toward basic and acidic residues; that stretch reads PVLKAKAEKRKGTLHVEK. Positions 454–479 are enriched in polar residues; that stretch reads VSTNGMGSTAPASKSLSSPSFPQRSN. Positions 481-490 are enriched in basic and acidic residues; sequence FRREKTEDRI. 2 stretches are compositionally biased toward basic and acidic residues: residues 758–773 and 817–828; these read ESQR…RISE and WKGEESHSREPS. Residues 1005–1023 are compositionally biased toward polar residues; that stretch reads VSLVSDKNVPSHSQKNRIV. Residues 1045 to 1056 are compositionally biased toward basic and acidic residues; that stretch reads ARERLSEKRRTV. Residues 1129–1150 are compositionally biased toward polar residues; sequence RSSNAQKVQQALTRSNSLSTPR. A compositionally biased stretch (low complexity) spans 1176–1193; sequence SNISPGTSSANSSSAKSS. The segment covering 1216 to 1227 has biased composition (polar residues); sequence NVPSDSETTSSV. Low complexity-rich tracts occupy residues 1261 to 1280, 1312 to 1328, and 1381 to 1398; these read TQKQ…SSST, ASTA…SRRQ, and DGDS…SISS. A compositionally biased stretch (polar residues) spans 1564 to 1596; sequence PSSNKKTSSTILTSNPLSRTTNNSAARTESQTP. Residues 1606 to 1618 are compositionally biased toward low complexity; sequence SSSSSSRSPGSSF.

This sequence belongs to the CEP170 family.

Its subcellular location is the cytoplasm. The protein localises to the cytoskeleton. Functionally, plays a role in microtubule organization. In Xenopus tropicalis (Western clawed frog), this protein is Centrosomal protein of 170 kDa protein B (cep170b).